Consider the following 60-residue polypeptide: Temporin-CG1 (60 aa).

A signal peptide spans 1-22 (MFTLKKSLLLLFFLATINLSLC). Positions 23 to 43 (EQERNAEEERRDDDERNAEVE) are cleaved as a propeptide — removed in mature form.

In terms of tissue distribution, expressed by the skin glands.

The protein resides in the secreted. Functionally, antimicrobial peptide active against a variety of Gram-positive and some Gram-negative bacterial strains. Has antifungal activity against a slime mold isolate. Has weak hemolytic activity against human erythrocytes. This chain is Temporin-CG1, found in Amolops chunganensis (Chungan torrent frog).